We begin with the raw amino-acid sequence, 735 residues long: E3 ubiquitin-protein ligase SH3RF2 (735 aa).

The RING-type zinc finger occupies 12–53; it reads CPVCFEKLDVTAKVLPCQHTFCKPCLQRIFKAHKELRCPECR. 2 consecutive SH3 domains span residues 125-184 and 187-252; these read DGVP…VIKQ and QPPP…PNLS. 2 disordered regions span residues 260-301 and 335-373; these read SKGH…GSGQ and TSPS…STAM. The segment covering 273-289 has biased composition (polar residues); that stretch reads LMSSPSRGKATNTSTLR. The segment at 373–466 is interaction with PAK4; the sequence is MVSVPSSQQH…RHPTVCTTWA (94 aa). Positions 383-444 constitute an SH3 3 domain; sequence LSTNMFVALH…PSDYVIPVFS (62 aa). Disordered regions lie at residues 472–534, 612–637, and 649–735; these read VSSQ…PVQS, ETPI…KPEN, and VRFQ…FPSK. Polar residues predominate over residues 523 to 534; that stretch reads RKNGSLQRPVQS. A compositionally biased stretch (pro residues) spans 617–627; that stretch reads SEPPPKPPASA. Residues 647–652 form an interaction with PPP1CA region; it reads KTVRFQ. Serine 655 is subject to Phosphoserine. Over residues 715–735 the composition is skewed to polar residues; the sequence is FSKTTPPVSTASVSQTLFPSK.

This sequence belongs to the SH3RF family. In terms of assembly, interacts with FASLG and PPP1CA. Interacts with PAK4 and TNFRSF1A. Interacts with DLK1, MAP3K10, MAPK8IP1/JIP1, MAPK8IP2/JIP2 and MAPK8IP3/JIP3. Interacts with RAC1 (both active GTP- or inactive GDP-bound forms). In terms of processing, autoubiquitinated.

It is found in the nucleus. The enzyme catalyses S-ubiquitinyl-[E2 ubiquitin-conjugating enzyme]-L-cysteine + [acceptor protein]-L-lysine = [E2 ubiquitin-conjugating enzyme]-L-cysteine + N(6)-ubiquitinyl-[acceptor protein]-L-lysine.. It participates in protein modification; protein ubiquitination. In terms of biological role, has E3 ubiquitin-protein ligase activity. Acts as an anti-apoptotic regulator of the JNK pathway by ubiquitinating and promoting the degradation of SH3RF1, a scaffold protein that is required for pro-apoptotic JNK activation. Facilitates TNF-alpha-mediated recruitment of adapter proteins TRADD and RIPK1 to TNFRSF1A and regulates PAK4 protein stability via inhibition of its ubiquitin-mediated proteasomal degradation. Inhibits PPP1CA phosphatase activity. The sequence is that of E3 ubiquitin-protein ligase SH3RF2 (Sh3rf2) from Rattus norvegicus (Rat).